The primary structure comprises 56 residues: uncharacterized protein (56 aa).

The next 2 helical transmembrane spans lie at 6-26 (VILL…LLNG) and 29-49 (VDFL…FVVV).

Its subcellular location is the cell membrane. This is an uncharacterized protein from Bacillus subtilis (strain 168).